The primary structure comprises 447 residues: MTSKTIFAQSSAKGKAGVAVFRISGSLSLLIVERLCGKFNIVPRKVYYRTIRCYATSQVIDKALIVYFKGEQSFTGEDVVEIHTHGSVAVAKMLTRSILECDGIRLAEPGEFAKRAFLNGKMDLTMAEGLVDLIESETLMQHKQAIRQMEGELEKLYSHWRGMLIKILSFIEGYIDFPDEEIPQSVLREAKSIINNLTREISNHLGDTRKGEVLRHGIVLAITGETNTGKSSLLNYLTMREAAIVSDIPGTTRDVIEAHLDIGGYPIIVRDTAGIRESDDPIEQEGIKRSLVAFKNSDIRILMIDATNINSVNQTIAHLLNDVYTIIVINKIDLVNYKYDSSILPCDKPIVAVSLLKQVGLDRLMSEIVSYAEKIADPGNVPAITRERYRNSLNKALELLQLVNLENDLVLAAEDLRMAIRYLEHITGKIKIDDILAEIFASFCIGK.

Residues arginine 22, glutamate 81, and lysine 121 each coordinate (6S)-5-formyl-5,6,7,8-tetrahydrofolate. Residues 217–373 (GIVLAITGET…LMSEIVSYAE (157 aa)) form the TrmE-type G domain. K(+) is bound at residue asparagine 227. GTP contacts are provided by residues 227–232 (NTGKSS), 246–252 (SDIPGTT), and 271–274 (DTAG). Serine 231 is a Mg(2+) binding site. K(+)-binding residues include serine 246, isoleucine 248, and threonine 251. Threonine 252 is a Mg(2+) binding site. Lysine 447 serves as a coordination point for (6S)-5-formyl-5,6,7,8-tetrahydrofolate.

This sequence belongs to the TRAFAC class TrmE-Era-EngA-EngB-Septin-like GTPase superfamily. TrmE GTPase family. Homodimer. Heterotetramer of two MnmE and two MnmG subunits. It depends on K(+) as a cofactor.

Its subcellular location is the cytoplasm. Exhibits a very high intrinsic GTPase hydrolysis rate. Involved in the addition of a carboxymethylaminomethyl (cmnm) group at the wobble position (U34) of certain tRNAs, forming tRNA-cmnm(5)s(2)U34. The chain is tRNA modification GTPase MnmE from Orientia tsutsugamushi (strain Boryong) (Rickettsia tsutsugamushi).